Here is a 122-residue protein sequence, read N- to C-terminus: Large ribosomal subunit protein uL14 (122 aa).

Belongs to the universal ribosomal protein uL14 family. In terms of assembly, part of the 50S ribosomal subunit. Forms a cluster with proteins L3 and L19. In the 70S ribosome, L14 and L19 interact and together make contacts with the 16S rRNA in bridges B5 and B8.

In terms of biological role, binds to 23S rRNA. Forms part of two intersubunit bridges in the 70S ribosome. This Aeromonas salmonicida (strain A449) protein is Large ribosomal subunit protein uL14.